We begin with the raw amino-acid sequence, 183 residues long: dCTP deaminase (183 aa).

Residues 106-111 (KSTYAR), 130-132 (TLE), glutamine 151, tyrosine 165, and glutamine 175 each bind dCTP. The active-site Proton donor/acceptor is the glutamate 132.

This sequence belongs to the dCTP deaminase family. Homotrimer.

It carries out the reaction dCTP + H2O + H(+) = dUTP + NH4(+). The protein operates within pyrimidine metabolism; dUMP biosynthesis; dUMP from dCTP (dUTP route): step 1/2. Catalyzes the deamination of dCTP to dUTP. The chain is dCTP deaminase from Acidobacterium capsulatum (strain ATCC 51196 / DSM 11244 / BCRC 80197 / JCM 7670 / NBRC 15755 / NCIMB 13165 / 161).